We begin with the raw amino-acid sequence, 417 residues long: Serine hydroxymethyltransferase (417 aa).

Residues L121 and 125–127 each bind (6S)-5,6,7,8-tetrahydrofolate; that span reads GHL. The residue at position 229 (K229) is an N6-(pyridoxal phosphate)lysine. 355–357 is a binding site for (6S)-5,6,7,8-tetrahydrofolate; the sequence is SPF.

Belongs to the SHMT family. As to quaternary structure, homodimer. It depends on pyridoxal 5'-phosphate as a cofactor.

The protein resides in the cytoplasm. It carries out the reaction (6R)-5,10-methylene-5,6,7,8-tetrahydrofolate + glycine + H2O = (6S)-5,6,7,8-tetrahydrofolate + L-serine. Its pathway is one-carbon metabolism; tetrahydrofolate interconversion. It functions in the pathway amino-acid biosynthesis; glycine biosynthesis; glycine from L-serine: step 1/1. Functionally, catalyzes the reversible interconversion of serine and glycine with tetrahydrofolate (THF) serving as the one-carbon carrier. This reaction serves as the major source of one-carbon groups required for the biosynthesis of purines, thymidylate, methionine, and other important biomolecules. Also exhibits THF-independent aldolase activity toward beta-hydroxyamino acids, producing glycine and aldehydes, via a retro-aldol mechanism. The polypeptide is Serine hydroxymethyltransferase (Shewanella denitrificans (strain OS217 / ATCC BAA-1090 / DSM 15013)).